We begin with the raw amino-acid sequence, 245 residues long: Complement C1q subcomponent subunit A (245 aa).

The signal sequence occupies residues 1–22; it reads METSQGWLVACVLTMTLVWTVA. A disordered region spans residues 28–114; the sequence is APNGKDGAPG…NPGNIRDQPR (87 aa). The 79-residue stretch at 31–109 folds into the Collagen-like domain; that stretch reads GKDGAPGNPG…KGVKGNPGNI (79 aa). A 4-hydroxyproline mark is found at Pro39 and Pro45. Lys48 carries the post-translational modification 5-hydroxylysine. Residue Lys48 is glycosylated (O-linked (Gal...) hydroxylysine; alternate). Pro54 carries the 4-hydroxyproline modification. Lys67 is modified (5-hydroxylysine). O-linked (Gal...) hydroxylysine; alternate glycosylation is present at Lys67. Residues Pro79 and Pro85 each carry the 4-hydroxyproline modification. The span at 79 to 99 shows a compositional bias: low complexity; the sequence is PGNVGLPGPSGPLGDSGPQGL. Residue Lys100 is modified to 5-hydroxylysine. Lys100 carries O-linked (Gal...) hydroxylysine; alternate glycosylation. Residues 110–245 enclose the C1q domain; that stretch reads RDQPRPAFSA…FSGFLIFPSA (136 aa). Asn146 is a glycosylation site (N-linked (GlcNAc...) asparagine). Gln199 is a Ca(2+) binding site.

In terms of assembly, core component of the complement C1 complex, a calcium-dependent complex composed of 1 molecule of the C1Q subcomplex, 2 molecules of C1R and 2 molecules of C1S. The C1Q subcomplex is composed 18 subunits: 3 chains of C1QA, C1QB, and C1QC trimerize to form 6 collagen-like triple helices connected to six globular ligand-recognition modules (C1q domain). Interacts with CR1 (via Sushi 24 and Sushi 25 domains). Interacts (via C-terminus) with CD33; this interaction activates CD33 inhibitory motifs. Post-translationally, O-linked glycans are assumed to be the Glc-Gal disaccharides typically found as secondary modifications of hydroxylated lysines in collagen-like domains.

It is found in the secreted. Its subcellular location is the cell surface. The C1Q subcomplex is inhibited by sulfated molecules, such as triterpenoid sulfates, heparan sulfate, or chondroitin sulfates. Core component of the complement C1 complex, a multiprotein complex that initiates the classical pathway of the complement system, a cascade of proteins that leads to phagocytosis and breakdown of pathogens and signaling that strengthens the adaptive immune system. The classical complement pathway is initiated by the C1Q subcomplex of the C1 complex, which specifically binds IgG or IgM immunoglobulins complexed with antigens, forming antigen-antibody complexes on the surface of pathogens: C1QA, together with C1QB and C1QC, specifically recognizes and binds the Fc regions of IgG or IgM via its C1q domain. Immunoglobulin-binding activates the proenzyme C1R, which cleaves C1S, initiating the proteolytic cascade of the complement system. The C1Q subcomplex is activated by a hexamer of IgG complexed with antigens, while it is activated by a pentameric IgM. The C1Q subcomplex also recognizes and binds phosphatidylserine exposed on the surface of cells undergoing programmed cell death, possibly promoting activation of the complement system. In Mus musculus (Mouse), this protein is Complement C1q subcomponent subunit A.